Reading from the N-terminus, the 171-residue chain is Peptide deformylase (171 aa).

Residues C91 and H133 each contribute to the Fe cation site. The active site involves E134. Residue H137 coordinates Fe cation.

The protein belongs to the polypeptide deformylase family. It depends on Fe(2+) as a cofactor.

It catalyses the reaction N-terminal N-formyl-L-methionyl-[peptide] + H2O = N-terminal L-methionyl-[peptide] + formate. Its function is as follows. Removes the formyl group from the N-terminal Met of newly synthesized proteins. Requires at least a dipeptide for an efficient rate of reaction. N-terminal L-methionine is a prerequisite for activity but the enzyme has broad specificity at other positions. This Haemophilus ducreyi (strain 35000HP / ATCC 700724) protein is Peptide deformylase.